A 258-amino-acid polypeptide reads, in one-letter code: MSALFWHTCGAGKRDLVLLHGWGLNAEVWRSIVPQLSAQFRLHLVDLPGYGRSGGDTPYSLAEMTQRVLAQAPERALWLGWSLGGLVATQAALYHPQRVSGLITVASSPCFTAQMAWPGIRSDVLYHFQSQLRDDFQRTVERFLALQTLGADSARQDTRALKSVVLAQPMPSAAVLNAGLSLLRETDLRPQLATLALPWLRFYGALDGLVPRRVAPLVDALSPCGRSLIIPGAAHAPFISHPEPFCAALCEFADGRSV.

The AB hydrolase-1 domain maps to 16 to 242 (LVLLHGWGLN…AAHAPFISHP (227 aa)). Substrate is bound by residues W22, 82-83 (SL), and 143-147 (FLALQ). The active-site Nucleophile is S82. Active-site residues include D207 and H235. H235 lines the substrate pocket.

It belongs to the AB hydrolase superfamily. Carboxylesterase BioH family. In terms of assembly, monomer.

The protein resides in the cytoplasm. It catalyses the reaction 6-carboxyhexanoyl-[ACP] methyl ester + H2O = 6-carboxyhexanoyl-[ACP] + methanol + H(+). The protein operates within cofactor biosynthesis; biotin biosynthesis. The physiological role of BioH is to remove the methyl group introduced by BioC when the pimeloyl moiety is complete. It allows to synthesize pimeloyl-ACP via the fatty acid synthetic pathway through the hydrolysis of the ester bonds of pimeloyl-ACP esters. The sequence is that of Pimeloyl-[acyl-carrier protein] methyl ester esterase from Edwardsiella ictaluri (strain 93-146).